Consider the following 311-residue polypeptide: DNA-directed RNA polymerase subunit alpha (311 aa).

The interval 1-227 (MAQFQIECVE…NLFCSLRNLD (227 aa)) is alpha N-terminal domain (alpha-NTD). The alpha C-terminal domain (alpha-CTD) stretch occupies residues 242-311 (ISQVLIEELQ…GISLPKEKTD (70 aa)).

It belongs to the RNA polymerase alpha chain family. As to quaternary structure, in plastids the minimal PEP RNA polymerase catalytic core is composed of four subunits: alpha, beta, beta', and beta''. When a (nuclear-encoded) sigma factor is associated with the core the holoenzyme is formed, which can initiate transcription.

It is found in the plastid. Its subcellular location is the chloroplast. The enzyme catalyses RNA(n) + a ribonucleoside 5'-triphosphate = RNA(n+1) + diphosphate. Functionally, DNA-dependent RNA polymerase catalyzes the transcription of DNA into RNA using the four ribonucleoside triphosphates as substrates. This chain is DNA-directed RNA polymerase subunit alpha, found in Porphyra purpurea (Red seaweed).